The sequence spans 262 residues: Phosphatidylserine decarboxylase proenzyme (262 aa).

Residues D86, H142, and S226 each act as charge relay system; for autoendoproteolytic cleavage activity in the active site. The active-site Schiff-base intermediate with substrate; via pyruvic acid; for decarboxylase activity is S226. At S226 the chain carries Pyruvic acid (Ser); by autocatalysis.

It belongs to the phosphatidylserine decarboxylase family. PSD-B subfamily. Prokaryotic type I sub-subfamily. As to quaternary structure, heterodimer of a large membrane-associated beta subunit and a small pyruvoyl-containing alpha subunit. Pyruvate serves as cofactor. In terms of processing, is synthesized initially as an inactive proenzyme. Formation of the active enzyme involves a self-maturation process in which the active site pyruvoyl group is generated from an internal serine residue via an autocatalytic post-translational modification. Two non-identical subunits are generated from the proenzyme in this reaction, and the pyruvate is formed at the N-terminus of the alpha chain, which is derived from the carboxyl end of the proenzyme. The autoendoproteolytic cleavage occurs by a canonical serine protease mechanism, in which the side chain hydroxyl group of the serine supplies its oxygen atom to form the C-terminus of the beta chain, while the remainder of the serine residue undergoes an oxidative deamination to produce ammonia and the pyruvoyl prosthetic group on the alpha chain. During this reaction, the Ser that is part of the protease active site of the proenzyme becomes the pyruvoyl prosthetic group, which constitutes an essential element of the active site of the mature decarboxylase.

It is found in the cell membrane. The enzyme catalyses a 1,2-diacyl-sn-glycero-3-phospho-L-serine + H(+) = a 1,2-diacyl-sn-glycero-3-phosphoethanolamine + CO2. The protein operates within phospholipid metabolism; phosphatidylethanolamine biosynthesis; phosphatidylethanolamine from CDP-diacylglycerol: step 2/2. In terms of biological role, catalyzes the formation of phosphatidylethanolamine (PtdEtn) from phosphatidylserine (PtdSer). In Bacillus cereus (strain ZK / E33L), this protein is Phosphatidylserine decarboxylase proenzyme.